The following is a 183-amino-acid chain: MNLSAKTVVLIAIGAALYGIGGLPMFGIPVFANTTLKPAMAVLALFSVLFGPLVGFLVGFIGHWVTDMFAGWGVWLTWVLGSGLVGLIIGFYPKITRGRLEMGKFTKCDFALFVFLAFLGNVIGYGCSAYLDSVLYAEPFTKVVAQLIIIAAGNTLLIAIVGHYILTAVAKRKQQSYNLKEAD.

5 helical membrane-spanning segments follow: residues 8–28 (VVLIAIGAALYGIGGLPMFGI), 41–61 (AVLALFSVLFGPLVGFLVGFI), 69–89 (FAGWGVWLTWVLGSGLVGLII), 110–130 (FALFVFLAFLGNVIGYGCSAY), and 147–167 (LIIIAAGNTLLIAIVGHYILT).

This sequence belongs to the UPF0397 family.

It is found in the cell membrane. The protein is UPF0397 protein PBPRA2239 of Photobacterium profundum (strain SS9).